A 398-amino-acid polypeptide reads, in one-letter code: 1-deoxy-D-xylulose 5-phosphate reductoisomerase (398 aa).

NADPH contacts are provided by Thr10, Gly11, Ser12, Ile13, Gly36, Lys37, Asn38, and Asn124. Residue Lys125 coordinates 1-deoxy-D-xylulose 5-phosphate. Position 126 (Glu126) interacts with NADPH. Asp150 contributes to the Mn(2+) binding site. The 1-deoxy-D-xylulose 5-phosphate site is built by Ser151, Glu152, Ser186, and His209. Mn(2+) is bound at residue Glu152. Gly215 is a binding site for NADPH. Positions 222, 227, 228, and 231 each coordinate 1-deoxy-D-xylulose 5-phosphate. Glu231 is a binding site for Mn(2+).

It belongs to the DXR family. As to quaternary structure, homodimer. Mg(2+) is required as a cofactor. Mn(2+) serves as cofactor.

It carries out the reaction 2-C-methyl-D-erythritol 4-phosphate + NADP(+) = 1-deoxy-D-xylulose 5-phosphate + NADPH + H(+). It participates in isoprenoid biosynthesis; isopentenyl diphosphate biosynthesis via DXP pathway; isopentenyl diphosphate from 1-deoxy-D-xylulose 5-phosphate: step 1/6. Its function is as follows. Catalyzes the NADPH-dependent rearrangement and reduction of 1-deoxy-D-xylulose-5-phosphate (DXP) to 2-C-methyl-D-erythritol 4-phosphate (MEP). The polypeptide is 1-deoxy-D-xylulose 5-phosphate reductoisomerase (Salmonella paratyphi A (strain ATCC 9150 / SARB42)).